A 320-amino-acid chain; its full sequence is Mitochondrial thiamine pyrophosphate carrier (320 aa).

Solcar repeat units lie at residues 13-106, 116-202, and 214-309; these read NTKL…LTEL, REFS…LKHL, and NENL…FCNV. Residues 19-39 traverse the membrane as a helical segment; the sequence is AVAGSVSGLVTRALISPFDVI. A Phosphoserine modification is found at S51. 4 helical membrane passes run 87 to 107, 122 to 142, 173 to 193, and 220 to 240; these read ILSI…TELV, FVCG…VDVL, VFYK…GLQF, and LLCG…LDLF. Positions 241–246 match the Substrate recognition motif; sequence KKRLQV. Residues 293–313 form a helical membrane-spanning segment; the sequence is ALSTGFMFFWYEFFCNVFHCM.

This sequence belongs to the mitochondrial carrier (TC 2.A.29) family.

It localises to the mitochondrion membrane. It catalyses the reaction thiamine phosphate(out) + thiamine diphosphate(in) = thiamine phosphate(in) + thiamine diphosphate(out). In terms of biological role, mitochondrial transporter mediating uptake of thiamine diphosphate into mitochondria. It is not clear if the antiporter activity is affected by the membrane potential or by the proton electrochemical gradient. In Macaca fascicularis (Crab-eating macaque), this protein is Mitochondrial thiamine pyrophosphate carrier (SLC25A19).